Reading from the N-terminus, the 132-residue chain is Antileukoproteinase (132 aa).

The first 24 residues, 1 to 24, serve as a signal peptide directing secretion; the sequence is MKFSGLFPFLLLALGTLALWAVEG. The WAP 1 domain occupies 28–76; sequence EALKAGACPPRKSAQCFGNEKPRCSSDWQCPHKKKCCLDTCGTECLDPV. 4 disulfides stabilise this stretch: Cys-35–Cys-64, Cys-43–Cys-68, Cys-51–Cys-63, and Cys-57–Cys-72. The N-linked (GlcNAc...) asparagine glycan is linked to Asn-77. The WAP 2 domain occupies 82 to 130; it reads VKKKPGTCPVIHGQCLMLKPLNHCETDDQCIGALKCCKAMCGKVCLSPV. Intrachain disulfides connect Cys-89-Cys-118, Cys-96-Cys-122, Cys-105-Cys-117, and Cys-111-Cys-126.

Interacts with GRN; interaction protects progranulin from proteolysis. As to expression, detected in bronchoalveolar fluid (at protein level). Detected in large and small intestine, trachea, skin, lung and tongue.

Its subcellular location is the secreted. Functionally, acid-stable proteinase inhibitor with strong affinities for trypsin, chymotrypsin, elastase, and cathepsin G. Modulates the inflammatory and immune responses after bacterial infection, and after infection by the intracellular parasite L.major. Down-regulates responses to bacterial lipopolysaccharide (LPS). Plays a role in regulating the activation of NF-kappa-B and inflammatory responses. Has antimicrobial activity against mycobacteria, but not against salmonella. Contributes to normal resistance against infection by M.tuberculosis. Required for normal resistance to infection by L.major. Required for normal wound healing, probably by preventing tissue damage by limiting protease activity. Together with ELANE, required for normal differentiation and proliferation of bone marrow myeloid cells. The chain is Antileukoproteinase (SLPI) from Ovis aries (Sheep).